A 494-amino-acid chain; its full sequence is 3-octaprenyl-4-hydroxybenzoate carboxy-lyase (494 aa).

Mn(2+) is bound at residue Asn172. Prenylated FMN-binding positions include 175–177, 189–191, and 194–195; these read IYR, RWL, and RG. Glu238 is a binding site for Mn(2+). Asp287 functions as the Proton donor in the catalytic mechanism.

It belongs to the UbiD family. In terms of assembly, homohexamer. Prenylated FMN serves as cofactor. It depends on Mn(2+) as a cofactor.

The protein resides in the cell membrane. The catalysed reaction is a 4-hydroxy-3-(all-trans-polyprenyl)benzoate + H(+) = a 2-(all-trans-polyprenyl)phenol + CO2. It functions in the pathway cofactor biosynthesis; ubiquinone biosynthesis. Its function is as follows. Catalyzes the decarboxylation of 3-octaprenyl-4-hydroxy benzoate to 2-octaprenylphenol, an intermediate step in ubiquinone biosynthesis. The sequence is that of 3-octaprenyl-4-hydroxybenzoate carboxy-lyase from Shigella flexneri serotype 5b (strain 8401).